Here is a 176-residue protein sequence, read N- to C-terminus: Ribosome rescue factor SmrB (176 aa).

The Smr domain occupies 93 to 168; it reads LDLHGYRQSE…GDAALLVLID (76 aa).

It belongs to the SmrB family. Associates with collided ribosomes, but not with correctly translating polysomes.

Its function is as follows. Acts as a ribosome collision sensor. Detects stalled/collided disomes (pairs of ribosomes where the leading ribosome is stalled and a second ribosome has collided with it) and endonucleolytically cleaves mRNA at the 5' boundary of the stalled ribosome. Stalled/collided disomes form a new interface (primarily via the 30S subunits) that binds SmrB. Cleaved mRNA becomes available for tmRNA ligation, leading to ribosomal subunit dissociation and rescue of stalled ribosomes. The polypeptide is Ribosome rescue factor SmrB (Shewanella sp. (strain MR-4)).